The sequence spans 398 residues: Heat-inducible transcription repressor HrcA (398 aa).

The protein belongs to the HrcA family.

Negative regulator of class I heat shock genes (grpE-dnaK-dnaJ and groELS operons). Prevents heat-shock induction of these operons. In Chlamydia pneumoniae (Chlamydophila pneumoniae), this protein is Heat-inducible transcription repressor HrcA.